We begin with the raw amino-acid sequence, 141 residues long: Nucleoside diphosphate kinase (141 aa).

Residues Lys11, Phe59, Arg87, Thr93, Arg104, and Asn114 each contribute to the ATP site. His117 (pros-phosphohistidine intermediate) is an active-site residue.

Belongs to the NDK family. As to quaternary structure, homotetramer. Mg(2+) is required as a cofactor.

The protein localises to the cytoplasm. The catalysed reaction is a 2'-deoxyribonucleoside 5'-diphosphate + ATP = a 2'-deoxyribonucleoside 5'-triphosphate + ADP. It catalyses the reaction a ribonucleoside 5'-diphosphate + ATP = a ribonucleoside 5'-triphosphate + ADP. Functionally, major role in the synthesis of nucleoside triphosphates other than ATP. The ATP gamma phosphate is transferred to the NDP beta phosphate via a ping-pong mechanism, using a phosphorylated active-site intermediate. This Burkholderia mallei (strain NCTC 10247) protein is Nucleoside diphosphate kinase.